The primary structure comprises 308 residues: Tryptophan 2,3-dioxygenase (308 aa).

Positions methionine 1–glycine 35 are disordered. Positions alanine 17–proline 30 are enriched in low complexity. Substrate contacts are provided by residues phenylalanine 77–histidine 81, tyrosine 139, and arginine 143. Histidine 266 contacts heme. Residue threonine 280 participates in substrate binding.

It belongs to the tryptophan 2,3-dioxygenase family. In terms of assembly, homotetramer. It depends on heme as a cofactor.

It carries out the reaction L-tryptophan + O2 = N-formyl-L-kynurenine. Its pathway is amino-acid degradation; L-tryptophan degradation via kynurenine pathway; L-kynurenine from L-tryptophan: step 1/2. Its function is as follows. Heme-dependent dioxygenase that catalyzes the oxidative cleavage of the L-tryptophan (L-Trp) pyrrole ring and converts L-tryptophan to N-formyl-L-kynurenine. Catalyzes the oxidative cleavage of the indole moiety. This chain is Tryptophan 2,3-dioxygenase, found in Burkholderia ambifaria (strain ATCC BAA-244 / DSM 16087 / CCUG 44356 / LMG 19182 / AMMD) (Burkholderia cepacia (strain AMMD)).